A 656-amino-acid polypeptide reads, in one-letter code: Heat shock 70 kDa protein, mitochondrial (656 aa).

The N-terminal 23 residues, 1–23, are a transit peptide targeting the mitochondrion; the sequence is MFARRLRGAGSLAAASLARWQSS. Residues 624–656 form a disordered region; sequence EYQQAAAGNSSSSSGNTDSSQGEQQQQGDQQKQ. The span at 626–656 shows a compositional bias: low complexity; sequence QQAAAGNSSSSSGNTDSSQGEQQQQGDQQKQ.

The protein belongs to the heat shock protein 70 family.

Its subcellular location is the mitochondrion matrix. It is found in the kinetoplast. Its function is as follows. May participate in eukaryotic mitochondrial DNA replication. The protein is Heat shock 70 kDa protein, mitochondrial (MTP70) of Trypanosoma cruzi.